The following is a 187-amino-acid chain: Shikimate kinase (187 aa).

Residue 14 to 19 (TSGKST) coordinates ATP. Ser18 is a binding site for Mg(2+). Positions 36, 60, and 82 each coordinate substrate. Residue Arg120 coordinates ATP. Residue Arg147 coordinates substrate.

Belongs to the shikimate kinase family. Monomer. The cofactor is Mg(2+).

The protein resides in the cytoplasm. It carries out the reaction shikimate + ATP = 3-phosphoshikimate + ADP + H(+). Its pathway is metabolic intermediate biosynthesis; chorismate biosynthesis; chorismate from D-erythrose 4-phosphate and phosphoenolpyruvate: step 5/7. Functionally, catalyzes the specific phosphorylation of the 3-hydroxyl group of shikimic acid using ATP as a cosubstrate. The polypeptide is Shikimate kinase (Chloroherpeton thalassium (strain ATCC 35110 / GB-78)).